The sequence spans 330 residues: Phosphate acyltransferase (330 aa).

This sequence belongs to the PlsX family. Homodimer. Probably interacts with PlsY.

The protein resides in the cytoplasm. The catalysed reaction is a fatty acyl-[ACP] + phosphate = an acyl phosphate + holo-[ACP]. It functions in the pathway lipid metabolism; phospholipid metabolism. In terms of biological role, catalyzes the reversible formation of acyl-phosphate (acyl-PO(4)) from acyl-[acyl-carrier-protein] (acyl-ACP). This enzyme utilizes acyl-ACP as fatty acyl donor, but not acyl-CoA. In Bacillus mycoides (strain KBAB4) (Bacillus weihenstephanensis), this protein is Phosphate acyltransferase.